A 339-amino-acid chain; its full sequence is Ferrochelatase (339 aa).

Residues H202 and E283 each contribute to the Fe cation site.

This sequence belongs to the ferrochelatase family.

The protein resides in the cytoplasm. The enzyme catalyses heme b + 2 H(+) = protoporphyrin IX + Fe(2+). The protein operates within porphyrin-containing compound metabolism; protoheme biosynthesis; protoheme from protoporphyrin-IX: step 1/1. Its function is as follows. Catalyzes the ferrous insertion into protoporphyrin IX. This chain is Ferrochelatase, found in Psychrobacter arcticus (strain DSM 17307 / VKM B-2377 / 273-4).